We begin with the raw amino-acid sequence, 388 residues long: Chorismate synthase (388 aa).

2 residues coordinate NADP(+): R39 and R45. Residues 130-132, 251-252, G296, 311-315, and R337 each bind FMN; these read RSS, NA, and KPIPT.

This sequence belongs to the chorismate synthase family. In terms of assembly, homotetramer. The cofactor is FMNH2.

The enzyme catalyses 5-O-(1-carboxyvinyl)-3-phosphoshikimate = chorismate + phosphate. It functions in the pathway metabolic intermediate biosynthesis; chorismate biosynthesis; chorismate from D-erythrose 4-phosphate and phosphoenolpyruvate: step 7/7. Its function is as follows. Catalyzes the anti-1,4-elimination of the C-3 phosphate and the C-6 proR hydrogen from 5-enolpyruvylshikimate-3-phosphate (EPSP) to yield chorismate, which is the branch point compound that serves as the starting substrate for the three terminal pathways of aromatic amino acid biosynthesis. This reaction introduces a second double bond into the aromatic ring system. The sequence is that of Chorismate synthase from Streptococcus pneumoniae serotype 2 (strain D39 / NCTC 7466).